The sequence spans 65 residues: Putative beta-neurotoxin RjAa4 (65 aa).

The 64-residue stretch at 1-64 (KEGYPMGRDG…VWDSSTNKCG (64 aa)) folds into the LCN-type CS-alpha/beta domain. 4 disulfides stabilise this stretch: Cys-11-Cys-63, Cys-15-Cys-37, Cys-22-Cys-44, and Cys-26-Cys-46.

It belongs to the long (4 C-C) scorpion toxin superfamily. Sodium channel inhibitor family. Beta subfamily. Expressed by the venom gland.

It localises to the secreted. Its function is as follows. Beta toxins bind voltage-independently at site-4 of sodium channels (Nav) and shift the voltage of activation toward more negative potentials thereby affecting sodium channel activation and promoting spontaneous and repetitive firing. This Rhopalurus junceus (Caribbean blue scorpion) protein is Putative beta-neurotoxin RjAa4.